The sequence spans 198 residues: Dynactin subunit 5 (198 aa).

Residues 179–188 (NTPASKGLPS) show a composition bias toward polar residues. The interval 179–198 (NTPASKGLPSTPTKLQTTTT) is disordered. Residues 189–198 (TPTKLQTTTT) show a composition bias toward low complexity.

Belongs to the dynactin subunits 5/6 family. Dynactin subunit 5 subfamily. As to quaternary structure, member of the pointed-end complex of the dynactin shoulder complex.

It is found in the cytoplasm. The protein localises to the cytoskeleton. This Dictyostelium discoideum (Social amoeba) protein is Dynactin subunit 5 (dynE).